A 326-amino-acid chain; its full sequence is Phosphate acyltransferase (326 aa).

The protein belongs to the PlsX family. As to quaternary structure, homodimer. Probably interacts with PlsY.

Its subcellular location is the cytoplasm. It carries out the reaction a fatty acyl-[ACP] + phosphate = an acyl phosphate + holo-[ACP]. Its pathway is lipid metabolism; phospholipid metabolism. In terms of biological role, catalyzes the reversible formation of acyl-phosphate (acyl-PO(4)) from acyl-[acyl-carrier-protein] (acyl-ACP). This enzyme utilizes acyl-ACP as fatty acyl donor, but not acyl-CoA. The sequence is that of Phosphate acyltransferase from Thermus thermophilus (strain ATCC BAA-163 / DSM 7039 / HB27).